Consider the following 331-residue polypeptide: MSVEIKTNTVDPIRQTYGNLQRRFGDKPASRYQEASYDIEAVTNFHYRPLWDPQHELHDPTRTAIRMTDWHKVTDPRQFYYGAYVQTRARMQEATEHAYGFCEKRELLSRLPAELQAKLLRCLVPLRHAELGANMNNSSIAGDSIAATVTQMHIYQAMDRLGMGQYLSRIGLLLDGGTGEALDQAKAYWLDDPIWQGLRRYVEDSFVIRDWFELGLAQNLVLDGLLQPLMYQRFDQWLTENGGSDVAMLTEFMRDWYGESTRWVDAMFKTVLAENDANREQVQAWLEVWEPRAYEALLPLAEEATGIAALDEVRSAFATRLQKIGLKSREE.

Belongs to the TmoE/XamoE family. In terms of assembly, the multicomponent enzyme phenol hydroxylase is formed by DmpL (P1 component), DmpM (P2 component), DmpN (P3 component), DmpO (P4 component) and DmpP (P5 component). The oxygenase component is a dimer composed of three subunits, DmpL, DmpN and DmpO (DmpLNO). DmpL interacts with the auxiliary protein DmpK (P0 component).

The enzyme catalyses phenol + NADH + O2 + H(+) = catechol + NAD(+) + H2O. It functions in the pathway aromatic compound metabolism; phenol degradation. With respect to regulation, requires DmpM for efficient turnover. The activity of DmpLNO oxygenase is inhibited by dithiothreitol (DTT) by a mechanism apparently involving H(2)O(2) generation. Part of a multicomponent enzyme which catalyzes the degradation of phenol and some of its methylated derivatives. DmpL, DmpN and DmpO form the oxygenase component of the complex. Required for growth on phenol and for in vitro phenol hydroxylase activity. This chain is Phenol 2-monooxygenase, oxygenase component DmpL, found in Pseudomonas sp. (strain CF600).